A 130-amino-acid chain; its full sequence is DNA-directed RNA polymerase subunit omega (130 aa).

Disordered stretches follow at residues 79 to 98 (EPEP…VDAD) and 109 to 130 (EEEL…EEDE).

It belongs to the RNA polymerase subunit omega family. As to quaternary structure, the RNAP catalytic core consists of 2 alpha, 1 beta, 1 beta' and 1 omega subunit. When a sigma factor is associated with the core the holoenzyme is formed, which can initiate transcription.

The enzyme catalyses RNA(n) + a ribonucleoside 5'-triphosphate = RNA(n+1) + diphosphate. Promotes RNA polymerase assembly. Latches the N- and C-terminal regions of the beta' subunit thereby facilitating its interaction with the beta and alpha subunits. This is DNA-directed RNA polymerase subunit omega (rpoZ) from Bradyrhizobium diazoefficiens (strain JCM 10833 / BCRC 13528 / IAM 13628 / NBRC 14792 / USDA 110).